The sequence spans 216 residues: N-(5'-phosphoribosyl)anthranilate isomerase (216 aa).

It belongs to the TrpF family.

It catalyses the reaction N-(5-phospho-beta-D-ribosyl)anthranilate = 1-(2-carboxyphenylamino)-1-deoxy-D-ribulose 5-phosphate. The protein operates within amino-acid biosynthesis; L-tryptophan biosynthesis; L-tryptophan from chorismate: step 3/5. This is N-(5'-phosphoribosyl)anthranilate isomerase from Methanopyrus kandleri (strain AV19 / DSM 6324 / JCM 9639 / NBRC 100938).